Here is a 272-residue protein sequence, read N- to C-terminus: Shikimate dehydrogenase (NADP(+)) (272 aa).

Residues 14 to 16 (SKS) and T61 contribute to the shikimate site. K65 serves as the catalytic Proton acceptor. E77 contributes to the NADP(+) binding site. N86 and D102 together coordinate shikimate. NADP(+)-binding positions include 126 to 130 (GAGGA), 149 to 154 (NRTYSR), and M213. Y215 is a binding site for shikimate. NADP(+) is bound at residue G237.

It belongs to the shikimate dehydrogenase family. As to quaternary structure, homodimer.

The catalysed reaction is shikimate + NADP(+) = 3-dehydroshikimate + NADPH + H(+). It participates in metabolic intermediate biosynthesis; chorismate biosynthesis; chorismate from D-erythrose 4-phosphate and phosphoenolpyruvate: step 4/7. Its function is as follows. Involved in the biosynthesis of the chorismate, which leads to the biosynthesis of aromatic amino acids. Catalyzes the reversible NADPH linked reduction of 3-dehydroshikimate (DHSA) to yield shikimate (SA). This Enterobacter sp. (strain 638) protein is Shikimate dehydrogenase (NADP(+)).